The chain runs to 59 residues: Temporin-CDYd (59 aa).

A signal peptide spans 1 to 22 (MFTLKKSMLLLLFLGTISLTLC). The propeptide occupies 23-42 (EEERDANEEEENGGEVKEEE).

It belongs to the frog skin active peptide (FSAP) family. Temporin subfamily. As to expression, expressed by the skin glands.

The protein resides in the secreted. In terms of biological role, antimicrobial peptide. This is Temporin-CDYd from Rana dybowskii (Dybovsky's frog).